The following is a 1521-amino-acid chain: uncharacterized protein (1521 aa).

5 disordered regions span residues 1–20, 85–124, 218–254, 431–482, and 735–797; these read MENN…NSNN, TFQS…NNNN, ASSP…SSSS, VLNS…TGIT, and NNNN…HQQQ. Composition is skewed to low complexity over residues 94–108, 219–254, and 431–454; these read NTSS…QNNP, SSPS…SSSS, and VLNS…NNTS. Over residues 455–464 the composition is skewed to polar residues; the sequence is PAIVTSASIH. Composition is skewed to low complexity over residues 465-482 and 735-762; these read NSNG…TGIT and NNNN…NNIL. The segment covering 763–774 has biased composition (polar residues); that stretch reads SNTLTSSLINEP. The span at 775 to 788 shows a compositional bias: low complexity; that stretch reads NQQHQHQQHQQQNQ. The stretch at 853 to 903 forms a coiled coil; sequence IVNSQQQQQQQQQQQQQQQQQQQQQQQQQQQQQQQQQQQQQQHNNTQNINN. Residues 1398-1453 are compositionally biased toward low complexity; the sequence is QQPLPTSKTSSSSSSTSSEATPYLSSSVPPSIVTSTPSTTPMISSSNPNTSSLPTS. Residues 1398–1455 are disordered; that stretch reads QQPLPTSKTSSSSSSTSSEATPYLSSSVPPSIVTSTPSTTPMISSSNPNTSSLPTSER.

This is an uncharacterized protein from Dictyostelium discoideum (Social amoeba).